The primary structure comprises 283 residues: Elongation factor Ts (283 aa).

The tract at residues 80-83 is involved in Mg(2+) ion dislocation from EF-Tu; it reads TDFV.

The protein belongs to the EF-Ts family.

The protein resides in the cytoplasm. Functionally, associates with the EF-Tu.GDP complex and induces the exchange of GDP to GTP. It remains bound to the aminoacyl-tRNA.EF-Tu.GTP complex up to the GTP hydrolysis stage on the ribosome. This chain is Elongation factor Ts, found in Pectobacterium atrosepticum (strain SCRI 1043 / ATCC BAA-672) (Erwinia carotovora subsp. atroseptica).